We begin with the raw amino-acid sequence, 136 residues long: uncharacterized protein (136 aa).

Helical transmembrane passes span 25 to 47 (ILKA…PHAF) and 78 to 97 (ITGA…LLTA).

It localises to the cell membrane. This is an uncharacterized protein from Bacillus subtilis (strain 168).